We begin with the raw amino-acid sequence, 164 residues long: UPF0114 protein YqhA (164 aa).

The next 3 membrane-spanning stretches (helical) occupy residues 15–35 (LLAP…LKFF), 53–73 (LILV…LVMV), and 136–156 (LMWY…MGYL).

This sequence belongs to the UPF0114 family.

It localises to the cell membrane. The polypeptide is UPF0114 protein YqhA (Salmonella agona (strain SL483)).